The following is a 320-amino-acid chain: Chorion protein S36 (320 aa).

The N-terminal stretch at 1–18 is a signal peptide; it reads MNCFLFTLFFVAAPLATA. A run of 5 repeats spans residues 178-181, 258-261, 266-269, 274-277, and Ala-290. The segment at 259–320 is disordered; that stretch reads APAQSYNAAP…YGSAPPASGY (62 aa).

Belongs to the chorion protein S36 family.

It is found in the secreted. Its function is as follows. Chorion membrane (egg shell) protein; plays a role in protecting the egg from the environment. The polypeptide is Chorion protein S36 (Cp36) (Ceratitis capitata (Mediterranean fruit fly)).